The primary structure comprises 68 residues: Alpha-conotoxin Lp1.4 (68 aa).

The first 21 residues, 1 to 21, serve as a signal peptide directing secretion; that stretch reads MGMRMMSIMFMLVVLATTVVS. The propeptide occupies 22–48; that stretch reads FTSDRALDAMNAAASKKASRLIALAVR. Disulfide bonds link C50–C56 and C51–C64. Residues 52–54 form a ser-Xaa-Pro motif, crucial for potent interaction with nAChR region; that stretch reads SHP. At D65 the chain carries Aspartic acid 1-amide.

This sequence belongs to the conotoxin A superfamily. In terms of tissue distribution, expressed by the venom duct.

The protein localises to the secreted. Its function is as follows. Alpha-conotoxins act on postsynaptic membranes, they bind to the nicotinic acetylcholine receptors (nAChR) and thus inhibit them. This toxin inhibits mouse muscle alpha-1-beta-1-gamma-delta (CHRNA1-CHRNB1-CHRNG-CHRND), and weakly rat neuronal alpha-6/alpha-3-beta-2 (CHRNA6/CHRNA3-CHRNB2). This is Alpha-conotoxin Lp1.4 from Conus leopardus (Leopard cone).